The chain runs to 214 residues: 7-cyano-7-deazaguanine synthase (214 aa).

Residue 10-20 participates in ATP binding; the sequence is FSGGQDSTTCL. Zn(2+)-binding residues include Cys-184, Cys-193, Cys-196, and Cys-199.

This sequence belongs to the QueC family. In terms of assembly, homodimer. Zn(2+) is required as a cofactor.

It carries out the reaction 7-carboxy-7-deazaguanine + NH4(+) + ATP = 7-cyano-7-deazaguanine + ADP + phosphate + H2O + H(+). Its pathway is purine metabolism; 7-cyano-7-deazaguanine biosynthesis. Catalyzes the ATP-dependent conversion of 7-carboxy-7-deazaguanine (CDG) to 7-cyano-7-deazaguanine (preQ(0)). In Exiguobacterium sp. (strain ATCC BAA-1283 / AT1b), this protein is 7-cyano-7-deazaguanine synthase.